The following is a 765-amino-acid chain: Zinc finger and BTB domain-containing protein 49 (765 aa).

The region spanning Cys-25 to Gln-91 is the BTB domain. 2 disordered regions span residues Gln-165–Thr-203 and Asn-275–Cys-294. C2H2-type zinc fingers lie at residues Tyr-395–His-417, Phe-423–His-445, Tyr-451–His-473, His-479–His-501, Phe-507–His-529, Tyr-535–His-557, and Tyr-563–His-585.

Belongs to the krueppel C2H2-type zinc-finger protein family. In terms of assembly, isoform 1 interacts with EP300 and KAT5/Tip60. The interaction with EP300 is direct and leads to synergistic induction of CDKN1A. On the CDKN1A promoter, forms a complex with ZBTB17/Miz-1; this interaction leads to additive CDKN1A transactivation. Isoform 3 also interacts with ZBTB17; this interaction may block ZBTB17 repressor activity. Highly expressed in normal epidermis and in other epithelial tissues, including in colon and lung. Tends to be down-regulated in colon, lung and skin cancer tissues.

The protein resides in the cytoplasm. It is found in the nucleus. Transcription factor. Inhibits cell proliferation by activating either CDKN1A/p21 transcription or RB1 transcription. Its function is as follows. Binds CDKN1A promoter and activates its transcription; this activity is further potentiated in the presence of EP300 (synergistic) and ZBTB17/Miz-1 (additive). In terms of biological role, activates RB1 transcription most probably by antagonizing ZBTB17 repression of RB1. Does not bind directly RB1 promoter. This Homo sapiens (Human) protein is Zinc finger and BTB domain-containing protein 49 (ZBTB49).